The sequence spans 158 residues: uncharacterized protein (158 aa).

Residues 109–143 (RVHARTGLPCPVCGDTVREVSFADKSFQYCPTCQT) form an FPG-type zinc finger.

This is an uncharacterized protein from Mycobacterium tuberculosis (strain ATCC 25618 / H37Rv).